Consider the following 239-residue polypeptide: MKNDVISPEFDENGRPLRRIRSFVRRQGRLTKGQEHALENYWPVMGVEFSEAPVDFATLFGREAPVTLEIGFGMGASLVAMVKARPEQNFLGIEVHSPGVGACLASAHEEGVENLRVMCHDAVEVLHKMIPDNSLSMVQLFFPDPWHKARHNKRRIVQVPFAELVLSKLKLGGVFHMATDWEAYAEHMLEVMSSIDGYKNLSESNDYVPRPESRPVTKFEQRGHRLGHGVWDLMFERVK.

Glutamate 69, glutamate 94, aspartate 121, and aspartate 144 together coordinate S-adenosyl-L-methionine. The active site involves aspartate 144. Lysine 148 is a substrate binding site. Residues 150-155 (RHNKRR) form an interaction with RNA region. Residues aspartate 180 and 217–220 (TKFE) contribute to the substrate site.

This sequence belongs to the class I-like SAM-binding methyltransferase superfamily. TrmB family. Monomer.

It catalyses the reaction guanosine(46) in tRNA + S-adenosyl-L-methionine = N(7)-methylguanosine(46) in tRNA + S-adenosyl-L-homocysteine. Its pathway is tRNA modification; N(7)-methylguanine-tRNA biosynthesis. Catalyzes the formation of N(7)-methylguanine at position 46 (m7G46) in tRNA. The sequence is that of tRNA (guanine-N(7)-)-methyltransferase from Salmonella paratyphi A (strain ATCC 9150 / SARB42).